Consider the following 155-residue polypeptide: CASP-like protein 5B2 (155 aa).

The Cytoplasmic segment spans residues 1–18 (MWEVAWWRPGTWGGLAMR). A helical transmembrane segment spans residues 19–39 (VGQVAFAGASIGVMASGAGFA). Residue Asn40 is glycosylated (N-linked (GlcNAc...) asparagine). Residues 40-43 (NYTA) are Extracellular-facing. Residues 44 to 64 (FCYLIASMGLQSLWSLGLACL) traverse the membrane as a helical segment. The Cytoplasmic portion of the chain corresponds to 65 to 77 (DVYALTVKRDLNN). A helical transmembrane segment spans residues 78–98 (ALLVSLFVIGDWVTALLSFAA). At 99–128 (SCSAGGVMVLFKRDVLFCRRYPQLPCGRFE) the chain is on the extracellular side. The chain crosses the membrane as a helical span at residues 129 to 149 (LAVALAFLSWALSATSAIIMF). The Cytoplasmic portion of the chain corresponds to 150–155 (CLLAAF).

It belongs to the Casparian strip membrane proteins (CASP) family. As to quaternary structure, homodimer and heterodimers.

It localises to the cell membrane. This is CASP-like protein 5B2 from Oryza sativa subsp. indica (Rice).